Here is a 399-residue protein sequence, read N- to C-terminus: S-adenosylmethionine synthase (399 aa).

An ATP-binding site is contributed by His-15. Asp-17 lines the Mg(2+) pocket. Glu-43 contacts K(+). Glu-56 and Gln-99 together coordinate L-methionine. A flexible loop region spans residues 99–109 (QSPDIARGVNR). ATP contacts are provided by residues 166–168 (DAK), 232–233 (RF), Asp-241, 247–248 (RK), Ala-264, and Lys-268. Asp-241 lines the L-methionine pocket. Lys-272 serves as a coordination point for L-methionine.

Belongs to the AdoMet synthase family. As to quaternary structure, homotetramer; dimer of dimers. Requires Mg(2+) as cofactor. K(+) is required as a cofactor.

The protein localises to the cytoplasm. The enzyme catalyses L-methionine + ATP + H2O = S-adenosyl-L-methionine + phosphate + diphosphate. The protein operates within amino-acid biosynthesis; S-adenosyl-L-methionine biosynthesis; S-adenosyl-L-methionine from L-methionine: step 1/1. Its function is as follows. Catalyzes the formation of S-adenosylmethionine (AdoMet) from methionine and ATP. The overall synthetic reaction is composed of two sequential steps, AdoMet formation and the subsequent tripolyphosphate hydrolysis which occurs prior to release of AdoMet from the enzyme. The chain is S-adenosylmethionine synthase from Nitrosospira multiformis (strain ATCC 25196 / NCIMB 11849 / C 71).